The primary structure comprises 249 residues: NADH dehydrogenase [ubiquinone] flavoprotein 2, mitochondrial (249 aa).

Residues Met-1–Asn-32 constitute a mitochondrion transit peptide. Lys-61 carries the N6-acetyllysine modification. Positions 135, 140, 176, and 180 each coordinate [2Fe-2S] cluster. Position 193 is a phosphotyrosine; by SRC (Tyr-193). Residues Ile-213 to Leu-249 are disordered.

This sequence belongs to the complex I 24 kDa subunit family. In terms of assembly, core subunit of respiratory chain NADH dehydrogenase (Complex I) which is composed of 45 different subunits. This is a component of the flavoprotein-sulfur (FP) fragment of the enzyme. The cofactor is [2Fe-2S] cluster.

The protein localises to the mitochondrion inner membrane. The catalysed reaction is a ubiquinone + NADH + 5 H(+)(in) = a ubiquinol + NAD(+) + 4 H(+)(out). Functionally, core subunit of the mitochondrial membrane respiratory chain NADH dehydrogenase (Complex I) which catalyzes electron transfer from NADH through the respiratory chain, using ubiquinone as an electron acceptor. Parts of the peripheral arm of the enzyme, where the electrons from NADH are accepted by flavin mononucleotide (FMN) and then passed along a chain of iron-sulfur clusters by electron tunnelling to the final acceptor ubiquinone. Contains one iron-sulfur cluster. The protein is NADH dehydrogenase [ubiquinone] flavoprotein 2, mitochondrial (NDUFV2) of Bos taurus (Bovine).